Reading from the N-terminus, the 506-residue chain is L-amino-acid oxidase (506 aa).

The signal sequence occupies residues 1–18; sequence MNVFFTFSLLFLAALGSC. A disulfide bridge links cysteine 28 with cysteine 191. Glutamate 36 contributes to the Zn(2+) binding site. FAD is bound by residues 61–62, serine 62, 81–82, arginine 89, and 105–108; these read MS, EA, and GPMR. Arginine 108 is a binding site for substrate. Glutamate 111, glutamate 118, and glutamate 150 together coordinate Zn(2+). N-linked (GlcNAc...) asparagine glycosylation is present at asparagine 190. Position 219 (aspartate 219) interacts with Zn(2+). Substrate is bound at residue histidine 241. Glutamate 248 is a Zn(2+) binding site. Residue valine 279 coordinates FAD. Residues glutamate 299 and histidine 332 each coordinate Zn(2+). Cysteine 349 and cysteine 430 form a disulfide bridge. Residue tyrosine 390 participates in substrate binding. Histidine 458 serves as a coordination point for Zn(2+). Residues glutamate 475 and 482–487 contribute to the FAD site; that span reads GWIDST. Substrate is bound at residue 482 to 483; sequence GW.

This sequence belongs to the flavin monoamine oxidase family. FIG1 subfamily. As to quaternary structure, homodimer; non-covalently linked. Stabilized by a single zinc-binding site located at the dimer interface (Asp-219, His-332 and His-458). Other zinc-bind sites can be understood as transient and non-specific, and appear due to the high concentration of zinc ions used in the crystallization experiments. FAD is required as a cofactor. Expressed by the venom gland.

It is found in the secreted. It catalyses the reaction an L-alpha-amino acid + O2 + H2O = a 2-oxocarboxylate + H2O2 + NH4(+). The catalysed reaction is L-leucine + O2 + H2O = 4-methyl-2-oxopentanoate + H2O2 + NH4(+). It carries out the reaction L-phenylalanine + O2 + H2O = 3-phenylpyruvate + H2O2 + NH4(+). The enzyme catalyses L-tryptophan + O2 + H2O = indole-3-pyruvate + H2O2 + NH4(+). It catalyses the reaction L-methionine + O2 + H2O = 4-methylsulfanyl-2-oxobutanoate + H2O2 + NH4(+). The catalysed reaction is L-isoleucine + O2 + H2O = (S)-3-methyl-2-oxopentanoate + H2O2 + NH4(+). It carries out the reaction L-tyrosine + O2 + H2O = 3-(4-hydroxyphenyl)pyruvate + H2O2 + NH4(+). Catalyzes an oxidative deamination of predominantly hydrophobic and aromatic L-amino acids, thus producing hydrogen peroxide that may contribute to the diverse toxic effects of this enzyme. Shows high catalytic activity against L-Met, L-Leu, L-Phe, L-Trp, L-Tyr, L-Ile. Shows no or weak activity on L-Cys, L-Val, L-Gln, L-Thr, L-Ser, L-Lys, L-Arg, L-Asn, L-Glu, L-Gly, L-Pro, L-Asp and L-His. Induces platelet aggregation in platelet-rich plasma, probably due to hydrogen peroxide production, since catalase inhibits aggregation effect. Induces moderate mouse paw edema. Induces apoptosis and shows cytotoxicity against several cancer cell lines, which is inhibited by catalase. Shows hemolytic activity and antibacterial activities against both Gram-positive and Gram-negative bacteria. Has parasiticidal activities against both trypanosomes and leishmania, as a result of enzyme-catalyzed hydrogen peroxide production. Unlike other snake venom L-amino acid oxidases, does not induce hemorrhage (with 50 ug of enzyme). This is L-amino-acid oxidase from Bothrops atrox (Barba amarilla).